Here is a 277-residue protein sequence, read N- to C-terminus: Large ribosomal subunit protein uL2 (277 aa).

The interval 222-277 is disordered; sequence GVAMNPVDHPHGGGEGRTSGGRHPVSPWGKPTKGKRTRSNKATDKFIMRTRHQRKK.

The protein belongs to the universal ribosomal protein uL2 family. In terms of assembly, part of the 50S ribosomal subunit. Forms a bridge to the 30S subunit in the 70S ribosome.

One of the primary rRNA binding proteins. Required for association of the 30S and 50S subunits to form the 70S ribosome, for tRNA binding and peptide bond formation. It has been suggested to have peptidyltransferase activity; this is somewhat controversial. Makes several contacts with the 16S rRNA in the 70S ribosome. This chain is Large ribosomal subunit protein uL2, found in Bartonella tribocorum (strain CIP 105476 / IBS 506).